Consider the following 211-residue polypeptide: Ribosomal RNA small subunit methyltransferase G (211 aa).

S-adenosyl-L-methionine contacts are provided by residues Gly76, Leu81, 127-128, and Arg142; that span reads VE.

This sequence belongs to the methyltransferase superfamily. RNA methyltransferase RsmG family.

The protein resides in the cytoplasm. It catalyses the reaction guanosine(527) in 16S rRNA + S-adenosyl-L-methionine = N(7)-methylguanosine(527) in 16S rRNA + S-adenosyl-L-homocysteine. Its function is as follows. Specifically methylates the N7 position of guanine in position 527 of 16S rRNA. In Vibrio campbellii (strain ATCC BAA-1116), this protein is Ribosomal RNA small subunit methyltransferase G.